Here is a 279-residue protein sequence, read N- to C-terminus: Movement protein (279 aa).

The protein belongs to the cucumovirus movement protein family.

It localises to the host cell junction. The protein localises to the host plasmodesma. In terms of biological role, transports viral genome to neighboring plant cells directly through plasmosdesmata, without any budding. The movement protein allows efficient cell to cell propagation, by bypassing the host cell wall barrier. Acts by forming a tubular structure at the host plasmodesmata, enlarging it enough to allow free passage of virion capsids. This chain is Movement protein, found in Cucumber mosaic virus (strain Kin) (CMV).